The chain runs to 264 residues: Putative HTH-type transcriptional regulator TrmBL2 (264 aa).

A DNA-binding region (H-T-H motif) is located at residues 33-54; sequence LTPAELASVSEVPAPRTYDVLR.

It belongs to the transcriptional regulator TrmB family.

Its function is as follows. Binds to the maltodextrin transport gene cluster (mdxE operon) promoter and to some other TGM (Thermococcales-Glycolytic-Motif) sequences, but not exclusively. This chain is Putative HTH-type transcriptional regulator TrmBL2 (trmBL2), found in Pyrococcus furiosus (strain ATCC 43587 / DSM 3638 / JCM 8422 / Vc1).